Consider the following 978-residue polypeptide: Mast/stem cell growth factor receptor Kit (978 aa).

The N-terminal stretch at 1–25 is a signal peptide; it reads MRGARGAWDFLFVLLLLLLVQTGSS. At 26 to 525 the chain is on the extracellular side; that stretch reads QPSVSPGELS…QIHAHTLFTP (500 aa). 5 consecutive Ig-like C2-type domains span residues 27 to 112, 121 to 205, 212 to 309, 318 to 411, and 414 to 508; these read PSVS…VFVR, DLPL…LKVR, PVVS…LEVV, PMMN…VNVN, and PEIL…FNFA. A disulfide bond links C58 and C97. 3 N-linked (GlcNAc...) asparagine glycosylation sites follow: N94, N130, and N145. 3 disulfide bridges follow: C136/C186, C151/C183, and C233/C291. N-linked (GlcNAc...) asparagine glycans are attached at residues N284, N294, N301, N321, N353, N368, N401, N464, and N487. C429 and C492 are oxidised to a cystine. A helical transmembrane segment spans residues 526–546; sequence LLIGFVIAAGLMCIFVMILTY. The Cytoplasmic portion of the chain corresponds to 547–978; it reads KYLQKPMYEV…TQPLLVHEDV (432 aa). Residues Y548 and Y554 each carry the phosphotyrosine modification. Y569 is a binding site for Mg(2+). Y569 and Y571 each carry phosphotyrosine; by autocatalysis. The important for interaction with phosphotyrosine-binding proteins stretch occupies residues 569-571; it reads YVY. The region spanning 590-939 is the Protein kinase domain; it reads LSFGKTLGAG…ISESTNHIYS (350 aa). ATP-binding positions include 597–604, K624, and 672–678; these read GAGAFGKV and EYCCYGD. A phosphotyrosine; by autocatalysis mark is found at Y704 and Y722. Y731 is subject to Phosphotyrosine. A phosphoserine; by PKC/PRKCA mark is found at S743 and S748. Residue D794 is the Proton acceptor of the active site. An ATP-binding site is contributed by R798. Positions 799 and 812 each coordinate Mg(2+). S823 bears the Phosphoserine mark. Y825 carries the post-translational modification Phosphotyrosine; by autocatalysis. Phosphoserine is present on S893. A Phosphotyrosine modification is found at Y902. Y938 carries the phosphotyrosine; by autocatalysis modification. S961 is modified (phosphoserine).

It belongs to the protein kinase superfamily. Tyr protein kinase family. CSF-1/PDGF receptor subfamily. As to quaternary structure, monomer in the absence of bound KITLG/SCF. Homodimer in the presence of bound KITLG/SCF, forming a heterotetramer with two KITLG/SCF molecules. Interacts (via phosphorylated tyrosine residues) with the adapter proteins GRB2 and GRB7 (via SH2 domain), and SH2B2/APS. Interacts (via C-terminus) with MPDZ (via the tenth PDZ domain). Interacts (via phosphorylated tyrosine residues) with PIK3R1 and PIK3CD. Interacts (via phosphorylated tyrosine) with CRK (isoform Crk-II), FYN, SHC1 and MATK/CHK (via SH2 domain). Interacts with LYN and FES/FPS. Interacts (via phosphorylated tyrosine residues) with the protein phosphatases PTPN6/SHP-1 (via SH2 domain), PTPN11/SHP-2 (via SH2 domain) and PTPRU. Interacts with PLCG1. Interacts with DOK1 and TEC. Interacts with IL1RAP (independent of stimulation with KITLG/SCF). A mast cell-specific KITLG/SCF-induced interleukin-33 signaling complex contains IL1RL1, IL1RAP, KIT and MYD88. In terms of processing, ubiquitinated by SOCS6. KIT is rapidly ubiquitinated after autophosphorylation induced by KITLG/SCF binding, leading to internalization and degradation. Post-translationally, autophosphorylated on tyrosine residues. KITLG/SCF binding promotes autophosphorylation. Phosphorylated tyrosine residues are important for interaction with specific binding partners.

It localises to the cell membrane. It carries out the reaction L-tyrosyl-[protein] + ATP = O-phospho-L-tyrosyl-[protein] + ADP + H(+). Present in an inactive conformation in the absence of bound ligand. KITLG/SCF binding leads to dimerization and activation by autophosphorylation on tyrosine residues. Activity is down-regulated by PRKCA-mediated phosphorylation on serine residues. In terms of biological role, tyrosine-protein kinase that acts as a cell-surface receptor for the cytokine KITLG/SCF and plays an essential role in the regulation of cell survival and proliferation, hematopoiesis, stem cell maintenance, gametogenesis, mast cell development, migration and function, and in melanogenesis. In response to KITLG/SCF binding, KIT can activate several signaling pathways. Phosphorylates PIK3R1, PLCG1, SH2B2/APS and CBL. Activates the AKT1 signaling pathway by phosphorylation of PIK3R1, the regulatory subunit of phosphatidylinositol 3-kinase. Activated KIT also transmits signals via GRB2 and activation of RAS, RAF1 and the MAP kinases MAPK1/ERK2 and/or MAPK3/ERK1. Promotes activation of STAT family members STAT1, STAT3, STAT5A and STAT5B. Activation of PLCG1 leads to the production of the cellular signaling molecules diacylglycerol and inositol 1,4,5-trisphosphate. KIT signaling is modulated by protein phosphatases, and by rapid internalization and degradation of the receptor. Activated KIT promotes phosphorylation of the protein phosphatases PTPN6/SHP-1 and PTPRU, and of the transcription factors STAT1, STAT3, STAT5A and STAT5B. Promotes phosphorylation of PIK3R1, CBL, CRK (isoform Crk-II), LYN, MAPK1/ERK2 and/or MAPK3/ERK1, PLCG1, SRC and SHC1. This chain is Mast/stem cell growth factor receptor Kit (KIT), found in Capra hircus (Goat).